Consider the following 104-residue polypeptide: Pole-localizer protein TmaR (104 aa).

Coiled coils occupy residues 13–43 (RKNK…NLLD) and 76–96 (SAEI…LTEE).

Belongs to the pole-localizer TmaR family.

It localises to the cytoplasm. Its function is as follows. Pole-localizer protein involved in the regulation of several cellular processes. In Vibrio vulnificus (strain CMCP6), this protein is Pole-localizer protein TmaR.